Reading from the N-terminus, the 514-residue chain is ATP synthase subunit alpha (514 aa).

170–177 is an ATP binding site; the sequence is GDRQIGKT.

It belongs to the ATPase alpha/beta chains family. In terms of assembly, F-type ATPases have 2 components, CF(1) - the catalytic core - and CF(0) - the membrane proton channel. CF(1) has five subunits: alpha(3), beta(3), gamma(1), delta(1), epsilon(1). CF(0) has three main subunits: a(1), b(2) and c(9-12). The alpha and beta chains form an alternating ring which encloses part of the gamma chain. CF(1) is attached to CF(0) by a central stalk formed by the gamma and epsilon chains, while a peripheral stalk is formed by the delta and b chains.

It localises to the cell inner membrane. The catalysed reaction is ATP + H2O + 4 H(+)(in) = ADP + phosphate + 5 H(+)(out). Functionally, produces ATP from ADP in the presence of a proton gradient across the membrane. The alpha chain is a regulatory subunit. In Pseudomonas putida (strain ATCC 47054 / DSM 6125 / CFBP 8728 / NCIMB 11950 / KT2440), this protein is ATP synthase subunit alpha.